Consider the following 581-residue polypeptide: Sulfate adenylyltransferase (581 aa).

An N-terminal region spans residues 1-176 (MANAPHGGVL…VQAIQAPTHF (176 aa)). The segment at 177-401 (DYVPLRFTPA…LRESYPPRPQ (225 aa)) is catalytic. Q204 serves as a coordination point for sulfate. Residues 204-207 (QTRN) and 298-301 (GRDH) each bind ATP. Residues T205, R206, and N207 contribute to the active site. Residue R206 participates in sulfate binding. A302 contacts sulfate. M340 lines the ATP pocket. The interval 402–581 (QGFTILLTGL…IMILESQNLV (180 aa)) is allosteric regulation domain; adenylyl-sulfate kinase-like. Residues 441–444 (EELR), 486–487 (TA), and R526 each bind 3'-phosphoadenylyl sulfate.

The protein in the N-terminal section; belongs to the sulfate adenylyltransferase family. This sequence in the C-terminal section; belongs to the APS kinase family. Homohexamer. Dimer of trimers.

Its subcellular location is the cytoplasm. It catalyses the reaction sulfate + ATP + H(+) = adenosine 5'-phosphosulfate + diphosphate. Its pathway is sulfur metabolism; hydrogen sulfide biosynthesis; sulfite from sulfate: step 1/3. With respect to regulation, allosterically inhibited by 3'-phosphoadenosine 5'-phosphosulfate (PAPS). Its function is as follows. Catalyzes the first intracellular reaction of sulfate assimilation, forming adenosine-5'-phosphosulfate (APS) from inorganic sulfate and ATP. Plays an important role in sulfate activation as a component of the biosynthesis pathway of sulfur-containing amino acids. The polypeptide is Sulfate adenylyltransferase (Cryptococcus neoformans var. neoformans serotype D (strain B-3501A) (Filobasidiella neoformans)).